Consider the following 142-residue polypeptide: NADH-quinone oxidoreductase subunit A 2 (142 aa).

3 helical membrane passes run 18–38, 73–93, and 104–124; these read FLPLALYTLAASILIGVLLLA, FYLIAIFFIVFDVEAAFIFAW, and GLVHITFFIVILLLGLVWLWL.

Belongs to the complex I subunit 3 family. NDH-1 is composed of 14 different subunits. Subunits NuoA, H, J, K, L, M, N constitute the membrane sector of the complex.

It localises to the cell inner membrane. It carries out the reaction a quinone + NADH + 5 H(+)(in) = a quinol + NAD(+) + 4 H(+)(out). NDH-1 shuttles electrons from NADH, via FMN and iron-sulfur (Fe-S) centers, to quinones in the respiratory chain. The immediate electron acceptor for the enzyme in this species is believed to be ubiquinone. Couples the redox reaction to proton translocation (for every two electrons transferred, four hydrogen ions are translocated across the cytoplasmic membrane), and thus conserves the redox energy in a proton gradient. This chain is NADH-quinone oxidoreductase subunit A 2, found in Geobacter sulfurreducens (strain ATCC 51573 / DSM 12127 / PCA).